A 93-amino-acid polypeptide reads, in one-letter code: Acylphosphatase (93 aa).

Residues 6 to 93 enclose the Acylphosphatase-like domain; sequence RARIVVSGRV…GDLGAFEIRF (88 aa). Catalysis depends on residues Arg-21 and Asn-39.

This sequence belongs to the acylphosphatase family.

It carries out the reaction an acyl phosphate + H2O = a carboxylate + phosphate + H(+). The chain is Acylphosphatase (acyP) from Anaeromyxobacter dehalogenans (strain 2CP-C).